The sequence spans 167 residues: Ammonium/H(+) antiporter subunit AmhM (167 aa).

Residues 79–163 (IDRIKLIRKQ…IQKFEELCAC (85 aa)) form the RCK C-terminal domain.

As to quaternary structure, interacts with AmhT.

Its subcellular location is the cell membrane. Functionally, modulates the activity of the ammonium/proton antiporter AmhT. The chain is Ammonium/H(+) antiporter subunit AmhM (amhM) from Alkalihalophilus pseudofirmus (strain ATCC BAA-2126 / JCM 17055 / OF4) (Bacillus pseudofirmus).